A 327-amino-acid polypeptide reads, in one-letter code: Tetraacyldisaccharide 4'-kinase (327 aa).

An ATP-binding site is contributed by Thr-52–Thr-59.

It belongs to the LpxK family.

It catalyses the reaction a lipid A disaccharide + ATP = a lipid IVA + ADP + H(+). Its pathway is glycolipid biosynthesis; lipid IV(A) biosynthesis; lipid IV(A) from (3R)-3-hydroxytetradecanoyl-[acyl-carrier-protein] and UDP-N-acetyl-alpha-D-glucosamine: step 6/6. In terms of biological role, transfers the gamma-phosphate of ATP to the 4'-position of a tetraacyldisaccharide 1-phosphate intermediate (termed DS-1-P) to form tetraacyldisaccharide 1,4'-bis-phosphate (lipid IVA). In Methylorubrum extorquens (strain CM4 / NCIMB 13688) (Methylobacterium extorquens), this protein is Tetraacyldisaccharide 4'-kinase.